The following is a 188-amino-acid chain: UPF0301 protein Cag_1601 (188 aa).

It belongs to the UPF0301 (AlgH) family.

The chain is UPF0301 protein Cag_1601 from Chlorobium chlorochromatii (strain CaD3).